The following is a 283-amino-acid chain: Phosphate import ATP-binding protein PstB (283 aa).

Polar residues predominate over residues 1–20 (MAQTLAQTKQISQSHTFDVS). The disordered stretch occupies residues 1 to 32 (MAQTLAQTKQISQSHTFDVSQSHHKTPDDTNS). The 242-residue stretch at 37 to 278 (YSTQNLDLWY…PSNKKTEDYI (242 aa)) folds into the ABC transporter domain. 69–76 (GPSGCGKS) contacts ATP.

Belongs to the ABC transporter superfamily. Phosphate importer (TC 3.A.1.7) family. As to quaternary structure, the complex is composed of two ATP-binding proteins (PstB), two transmembrane proteins (PstC and PstA) and a solute-binding protein (PstS).

The protein localises to the cell membrane. The catalysed reaction is phosphate(out) + ATP + H2O = ADP + 2 phosphate(in) + H(+). Functionally, part of the ABC transporter complex PstSACB involved in phosphate import. Responsible for energy coupling to the transport system. This is Phosphate import ATP-binding protein PstB from Staphylococcus aureus (strain MRSA252).